Consider the following 409-residue polypeptide: Serine/threonine transporter SstT (409 aa).

Helical transmembrane passes span 24-44 (LALG…AGLF), 48-68 (FVGA…AATI), 82-102 (IIVL…IAGM), 142-162 (AIAN…GAAL), 194-214 (LGIF…ALAG), 218-238 (LLAV…PAIV), 292-312 (IPLG…VLAM), 319-339 (GIQV…VSAC), and 365-385 (VAMQ…SAET).

This sequence belongs to the dicarboxylate/amino acid:cation symporter (DAACS) (TC 2.A.23) family.

The protein resides in the cell inner membrane. It catalyses the reaction L-serine(in) + Na(+)(in) = L-serine(out) + Na(+)(out). The enzyme catalyses L-threonine(in) + Na(+)(in) = L-threonine(out) + Na(+)(out). In terms of biological role, involved in the import of serine and threonine into the cell, with the concomitant import of sodium (symport system). The chain is Serine/threonine transporter SstT from Neisseria meningitidis serogroup C (strain 053442).